The following is a 1004-amino-acid chain: UPF0182 protein Mflv_4654 (1004 aa).

Helical transmembrane passes span 18 to 38 (FLIA…RFID), 63 to 83 (LVIF…GLAL), 114 to 134 (LIGI…GQSY), 176 to 196 (FVGV…FGGI), 211 to 231 (IQLI…YWFD), 260 to 280 (KLIL…AIFL), and 288 to 308 (IGVV…PLVV). Positions 896–940 (PGADATATGPAATEPPAGQAPQTQGNNTAPPAAQPPNRQGQAPAG) are enriched in low complexity. Residues 896–960 (PGADATATGP…TGPTQLSAAK (65 aa)) are disordered.

Belongs to the UPF0182 family.

Its subcellular location is the cell membrane. The chain is UPF0182 protein Mflv_4654 from Mycolicibacterium gilvum (strain PYR-GCK) (Mycobacterium gilvum (strain PYR-GCK)).